The sequence spans 247 residues: F-box and leucine-rich protein 22 (247 aa).

In terms of domain architecture, F-box spans 6-52; that stretch reads TMHITQLNRECLLHLFSFLDKDSRKSLARTCSQLHDVFEDPALWSLL. 2 disordered regions span residues 124–154 and 173–247; these read SPRRREAPAPSSGTPIAVGPKSPRWGGPDHS and GLGS…AFPQ. Pro residues predominate over residues 184–200; that stretch reads ETPPAPGVSWGPPPPGA.

Directly interacts with SKP1 and CUL1. Enriched in cardiac muscle.

It localises to the cytoplasm. Its subcellular location is the myofibril. The protein resides in the sarcomere. It is found in the z line. It functions in the pathway protein modification; protein ubiquitination. Functionally, substrate-recognition component of the SCF (SKP1-CUL1-F-box protein)-type E3 ubiquitin ligase complex. Promotes ubiquitination of sarcomeric proteins alpha-actinin-2 (ACTN2) and filamin-C (FLNC). This chain is F-box and leucine-rich protein 22 (FBXL22), found in Homo sapiens (Human).